The chain runs to 451 residues: MSKLQHHSIGEVEPSIAIVGSGPAGCYTAQTLHKQWPSAQIVIFERLPVPYGLLRYGVSPDHQGTKAIARQFDRLFAEASVHFIGNVEVGKHISVEELQDAFDVVVLAAGLGADRPLPSLAGDAVYGAGQVMRWFNSHPDEQSFAPGFGATTTIIGNGNVAMDVVRLLAKHRDSFTGSDLDPQLIEKQPSRIHVVGRSPASAAKFDSMMIRELAEIDDAVFDVDVVDEPGHEDKRIHAKTKALLDLTAARAVPSPRVHVSFHFGWTPESLEPTGDGRTLRLVNTESRLAVKLIETDSVITAVGFGSGLRHEIDRVRFESAASDLDNGLLDTGLYCSGWFRRGPTGGIPANRLDAKMVCTRIIEDVASGAITPKKRGLEELATHLHPDTVDFTGWQRIDAVEASRTEHGRCRTKLPDIATMLDFARNRTHERTTDDTYRKQITDTVGHKEKR.

Alanine 24, glutamate 45, leucine 53, and valine 89 together coordinate FAD. NADP(+) contacts are provided by residues 157–160 and 197–198; these read NGNV and RS. FAD-binding positions include tryptophan 338 and 345-347; that span reads GGI. An NADP(+)-binding site is contributed by glycine 345.

The protein belongs to the ferredoxin--NADP reductase type 1 family. FAD serves as cofactor.

Functionally, involved in the degradation of cineol (eucalyptol). Catalyzes the reduction of cindoxin (CinC). The protein is Cindoxin reductase (cinB) of Citrobacter braakii.